A 229-amino-acid polypeptide reads, in one-letter code: Thiamine import ATP-binding protein ThiQ (229 aa).

In terms of domain architecture, ABC transporter spans 2–229 (LHLENIRVRQ…NNAEPLRPWM (228 aa)). Residue 32 to 39 (GASGSGKS) coordinates ATP.

It belongs to the ABC transporter superfamily. Thiamine importer (TC 3.A.1.19.1) family. The complex is composed of two ATP-binding proteins (ThiQ), two transmembrane proteins (ThiP) and a solute-binding protein (ThiB).

It localises to the cell inner membrane. The enzyme catalyses thiamine(out) + ATP + H2O = thiamine(in) + ADP + phosphate + H(+). In terms of biological role, part of the ABC transporter complex ThiBPQ involved in thiamine import. Responsible for energy coupling to the transport system. The chain is Thiamine import ATP-binding protein ThiQ from Jannaschia sp. (strain CCS1).